The primary structure comprises 237 residues: Purine nucleoside phosphorylase DeoD-type (237 aa).

Histidine 4 is a binding site for a purine D-ribonucleoside. Phosphate contacts are provided by residues glycine 20, arginine 24, arginine 43, and 87-90 (RVGT). A purine D-ribonucleoside contacts are provided by residues 179 to 181 (EME) and 203 to 204 (SD). The active-site Proton donor is the aspartate 204.

It belongs to the PNP/UDP phosphorylase family. Homohexamer; trimer of homodimers.

It carries out the reaction a purine D-ribonucleoside + phosphate = a purine nucleobase + alpha-D-ribose 1-phosphate. It catalyses the reaction a purine 2'-deoxy-D-ribonucleoside + phosphate = a purine nucleobase + 2-deoxy-alpha-D-ribose 1-phosphate. Catalyzes the reversible phosphorolytic breakdown of the N-glycosidic bond in the beta-(deoxy)ribonucleoside molecules, with the formation of the corresponding free purine bases and pentose-1-phosphate. This is Purine nucleoside phosphorylase DeoD-type from Streptococcus gordonii (strain Challis / ATCC 35105 / BCRC 15272 / CH1 / DL1 / V288).